Reading from the N-terminus, the 280-residue chain is Borealin (280 aa).

The required for interaction with INCENP stretch occupies residues 1–58 (MAPRKGSSRVAKTNSLRRRKLASFLKDFDREVEIRIKQIESDRQNLLKEVDNLYNIEI). Positions 1–88 (MAPRKGSSRV…NKQALEEAAT (88 aa)) are required for centromere localization. Residues 1 to 140 (MAPRKGSSRV…ENERKNLQTA (140 aa)) form a required for interaction with SENP3 region. The segment at 10 to 109 (VAKTNSLRRR…TAEAIQTPLK (100 aa)) is required to form a minimal CPC core complex that localizes to the central spindle and midbody and properly executes the role of the CPC during cytokinesis. The segment at 20-78 (KLASFLKDFDREVEIRIKQIESDRQNLLKEVDNLYNIEILRLPKALREMNWLDYFALGG) is required for interaction with INCENP and BIRC5. A phosphothreonine; by TTK mark is found at T88 and T94. T106 is subject to Phosphothreonine. The residue at position 110 (S110) is a Phosphoserine. The disordered stretch occupies residues 130 to 169 (EENERKNLQTARVKRCPPSKKRTQSIQGKGKGKRSSRANT). A Glycyl lysine isopeptide (Lys-Gly) (interchain with G-Cter in SUMO2) cross-link involves residue K135. Positions 141-152 (RVKRCPPSKKRT) are enriched in basic residues. The residue at position 165 (S165) is a Phosphoserine; by AURKB. Residue T169 is modified to Phosphothreonine; by TTK. Phosphothreonine occurs at positions 189 and 204. 2 positions are modified to phosphoserine: S219 and S224. T230 is subject to Phosphothreonine; by TTK. Phosphoserine is present on residues S238 and S244.

It belongs to the borealin family. As to quaternary structure, may form homooligomers and homodimers. Component of the chromosomal passenger complex (CPC) composed of at least BIRC5/survivin, CDCA8/borealin, INCENP, AURKB or AURKC; in the complex forms a triple-helix bundle-based subcomplex with INCENP and BIRC5. Interacts with SENP3, UBE2I and RANBP2. Interacts (phosphorylated) with SGO1 and SGO2; the association is dependent on CDK1. Post-translationally, phosphorylated by TTK, essentially at Thr-88, Thr94, Thr-169 and Thr-230. Phosphorylation (probably by CDK1) promotes targeting of the CPC to centromeric DNA. In terms of processing, sumoylated by UBE2I and RANBP2. Desumoylated by SENP3 through the removal of SUMO2 and SUMO3.

It is found in the nucleus. The protein localises to the nucleolus. The protein resides in the cytoplasm. It localises to the chromosome. Its subcellular location is the centromere. It is found in the cytoskeleton. The protein localises to the spindle. Component of the chromosomal passenger complex (CPC), a complex that acts as a key regulator of mitosis. The CPC complex has essential functions at the centromere in ensuring correct chromosome alignment and segregation and is required for chromatin-induced microtubule stabilization and spindle assembly. In the complex, it may be required to direct the CPC to centromeric DNA. This is Borealin (CDCA8) from Pongo abelii (Sumatran orangutan).